Reading from the N-terminus, the 347-residue chain is Protein RecA (347 aa).

Residue 65 to 72 (GPESSGKT) coordinates ATP. The interval 325 to 347 (KLGISDGDVEETEDAPKSLFDEE) is disordered. Over residues 338-347 (DAPKSLFDEE) the composition is skewed to basic and acidic residues.

Belongs to the RecA family.

It localises to the cytoplasm. In terms of biological role, can catalyze the hydrolysis of ATP in the presence of single-stranded DNA, the ATP-dependent uptake of single-stranded DNA by duplex DNA, and the ATP-dependent hybridization of homologous single-stranded DNAs. It interacts with LexA causing its activation and leading to its autocatalytic cleavage. The polypeptide is Protein RecA (Staphylococcus aureus (strain Mu3 / ATCC 700698)).